The following is a 98-amino-acid chain: DNA-binding protein Fis (98 aa).

The H-T-H motif DNA-binding region spans 74 to 93 (QTRAALMLGINRSTLRKKLK).

It belongs to the transcriptional regulatory Fis family. As to quaternary structure, homodimer.

Functionally, activates ribosomal RNA transcription. Plays a direct role in upstream activation of rRNA promoters. The protein is DNA-binding protein Fis of Buchnera aphidicola subsp. Acyrthosiphon pisum (strain 5A).